We begin with the raw amino-acid sequence, 320 residues long: Probable movement protein (320 aa).

Catalysis depends on residues H144, D171, and S199. Disordered regions lie at residues 251-270 (RRSR…QEKR) and 286-320 (EFGR…GSSP).

The protein belongs to the tobamoviruses movement protein family.

In terms of biological role, may play a role in virus cell to cell movement by increasing the size exclusion limit of plasmodesmata and forming a complex with viral RNA to assist its movement. May also have a papain-like protease activity and cleave the genome polyprotein. The chain is Probable movement protein from Malus sylvestris (European crab apple).